The chain runs to 287 residues: Protease HtpX homolog (287 aa).

2 helical membrane-spanning segments follow: residues 4-24 and 35-53; these read VGLFLATNLAILLLLGLVMSL and LLLMAGCFGMGGSLISLAL. His-139 contributes to the Zn(2+) binding site. Glu-140 is an active-site residue. A Zn(2+)-binding site is contributed by His-143. 2 helical membrane passes run 147–167 and 194–214; these read GDMVTLSLIQGVLNTFVIFLS and AVSMLLEFVFGLFASMIVMWF. Position 219 (Glu-219) interacts with Zn(2+).

It belongs to the peptidase M48B family. It depends on Zn(2+) as a cofactor.

The protein resides in the cell inner membrane. This Desulfotalea psychrophila (strain LSv54 / DSM 12343) protein is Protease HtpX homolog.